We begin with the raw amino-acid sequence, 390 residues long: MEMTEASKQTTAEGSANPEPDQILSPRRSLELKQKKWWISVSLCIFLVLLGDSLVMLLLNFFYVQDNREDSDQDLQYRGTWLQALVQNAAFPLLIPLFFIFPSPKQNQETTNTRFLSFRLILLYISLGVLVAAHSKLFALGKLYANFGVFTLISATQLIFTAIFAAIINRFKFTRWIILSIIGSILIYVFGSPEFGGEPDENEEFYSIQAWLTFAASVAFALSLCLFQLCFEKVLVKTKRYGNKKVFRMVIEMQICVSFVATVVCLVGLFASGENKELQGDSHRFKKGETYYVLSLIGLALSWQVWAVGLMGLVLYVSGVFGDVVHMCTSPLVALFVVLAFDFMDDEFSWPRIGTLIATVVALGSYFYTLHKRNKKKMVELYQTENNIDV.

Residues 1–14 (MEMTEASKQTTAEG) are compositionally biased toward polar residues. Residues 1-23 (MEMTEASKQTTAEGSANPEPDQI) form a disordered region. Serine 25 is subject to Phosphoserine. Transmembrane regions (helical) follow at residues 39 to 59 (ISVS…MLLL), 81 to 101 (WLQA…FFIF), 120 to 140 (LILL…LFAL), 148 to 168 (GVFT…AAII), 176 to 196 (WIIL…PEFG), 211 to 231 (WLTF…QLCF), 250 to 270 (VIEM…VGLF), 297 to 317 (IGLA…VLYV), 324 to 344 (VVHM…FDFM), and 348 to 368 (FSWP…SYFY).

It belongs to the purine permeases (TC 2.A.7.14) family.

Its subcellular location is the membrane. This Arabidopsis thaliana (Mouse-ear cress) protein is Probable purine permease 18 (PUP18).